The sequence spans 679 residues: Glycine--tRNA ligase beta subunit (679 aa).

This sequence belongs to the class-II aminoacyl-tRNA synthetase family. Tetramer of two alpha and two beta subunits.

The protein localises to the cytoplasm. The enzyme catalyses tRNA(Gly) + glycine + ATP = glycyl-tRNA(Gly) + AMP + diphosphate. In Streptococcus equi subsp. zooepidemicus (strain H70), this protein is Glycine--tRNA ligase beta subunit.